Reading from the N-terminus, the 266-residue chain is Putative carbamate hydrolase RutD (266 aa).

The protein belongs to the AB hydrolase superfamily. Hydrolase RutD family.

It catalyses the reaction carbamate + 2 H(+) = NH4(+) + CO2. Involved in pyrimidine catabolism. May facilitate the hydrolysis of carbamate, a reaction that can also occur spontaneously. The sequence is that of Putative carbamate hydrolase RutD from Escherichia coli O150:H5 (strain SE15).